A 300-amino-acid polypeptide reads, in one-letter code: Oxidoreductase BOA1 (300 aa).

The protein belongs to the NmrA-type oxidoreductase family. Isoflavone reductase subfamily.

It functions in the pathway polyketide biosynthesis. Its function is as follows. Oxidoreductase; part of the gene cluster A that mediates the biosynthesis of botcinic acid and its botcinin derivatives, acetate-derived polyketides that contribute to virulence when combined with the sesquiterpene botrydial. Botcinic acid and its derivatives have been shown to induce chlorosis and necrosis during host plant infection, but also have antifungal activities. Two polyketide synthases, BOA6 and BOA9, are involved in the biosynthesis of botcinins. BOA6 mediates the formation of the per-methylated tetraketide core by condensation of four units of malonyl-CoA with one unit of acetyl-CoA, which would be methylated in activated methylene groups to yield a bicyclic acid intermediate that could then either be converted to botrylactone derivatives or lose the starter acetate unit through a retro-Claisen type C-C bond cleavage to yield botcinin derivatives. The second polyketide synthase, BOA9, is probably required for the biosynthesis of the tetraketide side chain of botcinins. The methyltransferase (MT) domain within BOA6 is probably responsible for the incorporation of four methyl groups. The trans-enoyl reductase BOA5 might take over the enoyl reductase function of BOA6 that misses an ER domain. The monooxygenases BOA2, BOA3 and BOA4 might be involved in further hydroxylations at C4, C5 and C8, whereas BOA7, close to BOA9, could potentially be involved in the hydroxylation at C4 in the side chain of botcinins. In Botryotinia fuckeliana (strain B05.10) (Noble rot fungus), this protein is Oxidoreductase BOA1.